The following is a 185-amino-acid chain: Elongation factor P (185 aa).

The protein belongs to the elongation factor P family.

It localises to the cytoplasm. The protein operates within protein biosynthesis; polypeptide chain elongation. Functionally, involved in peptide bond synthesis. Stimulates efficient translation and peptide-bond synthesis on native or reconstituted 70S ribosomes in vitro. Probably functions indirectly by altering the affinity of the ribosome for aminoacyl-tRNA, thus increasing their reactivity as acceptors for peptidyl transferase. The sequence is that of Elongation factor P from Burkholderia multivorans (strain ATCC 17616 / 249).